The primary structure comprises 256 residues: Putative bidirectional sugar transporter SWEET7e (256 aa).

The Extracellular portion of the chain corresponds to 1–9; sequence MVSPDLIRN. A helical transmembrane segment spans residues 10–30; it reads VVGIVGNAISFGLFLSPVLTF. The MtN3/slv 1 domain maps to 10-97; it reads VVGIVGNAIS…TIFFLFSNKK (88 aa). The Cytoplasmic segment spans residues 31 to 45; the sequence is WRIIKEKDMKYFKAD. The helical transmembrane segment at 46–66 threads the bilayer; the sequence is PYLATLLNCMLWVFYGLPIVH. Residues 67–69 are Extracellular-facing; the sequence is PNS. Residues 70 to 90 traverse the membrane as a helical segment; it reads ILVVTINGIGLVIEAVYLTIF. Residues 91 to 100 lie on the Cytoplasmic side of the membrane; sequence FLFSNKKNKK. The helical transmembrane segment at 101 to 121 threads the bilayer; it reads MGVVLATEALFMAAVALGVLL. The Extracellular portion of the chain corresponds to 122-130; it reads GAHTHQRRS. A helical transmembrane segment spans residues 131-151; it reads LIVGILCVIFGTIMYSSPLTI. Residues 133–212 form the MtN3/slv 2 domain; the sequence is VGILCVIFGT…LMQLILDKNQ (80 aa). The Cytoplasmic segment spans residues 152–164; the sequence is MSQVVKTKSVEYM. A helical membrane pass occupies residues 165–185; sequence PLLLSVVSFLNGLCWTSYALI. A topological domain (extracellular) is located at residue R186. Residues 187 to 207 traverse the membrane as a helical segment; sequence FDIFITIPNGLGVLFTLMQLI. Residues 208 to 256 lie on the Cytoplasmic side of the membrane; that stretch reads LDKNQDKNLELPTVAPVAKETSIVTPVSKDDDINGSTASHVIINITKEP.

Belongs to the SWEET sugar transporter family. As to quaternary structure, forms homooligomers and/or heterooligomers.

The protein resides in the cell membrane. In terms of biological role, mediates both low-affinity uptake and efflux of sugar across the plasma membrane. The protein is Putative bidirectional sugar transporter SWEET7e (SWEET7E) of Oryza sativa subsp. japonica (Rice).